The primary structure comprises 95 residues: Co-chaperonin GroES (95 aa).

It belongs to the GroES chaperonin family. In terms of assembly, heptamer of 7 subunits arranged in a ring. Interacts with the chaperonin GroEL.

It localises to the cytoplasm. In terms of biological role, together with the chaperonin GroEL, plays an essential role in assisting protein folding. The GroEL-GroES system forms a nano-cage that allows encapsulation of the non-native substrate proteins and provides a physical environment optimized to promote and accelerate protein folding. GroES binds to the apical surface of the GroEL ring, thereby capping the opening of the GroEL channel. This chain is Co-chaperonin GroES, found in Vesicomyosocius okutanii subsp. Calyptogena okutanii (strain HA).